We begin with the raw amino-acid sequence, 270 residues long: NAD(P)H-hydrate epimerase (270 aa).

The YjeF N-terminal domain occupies 25-234; it reads FQQLMDLMQN…DLLAPEEIYQ (210 aa). 73–77 lines the (6S)-NADPHX pocket; that stretch reads DNGGQ. 2 residues coordinate K(+): Asn-74 and Asp-144. Residues 148–154 and Glu-177 contribute to the (6S)-NADPHX site; that span reads GVGLYGH. Thr-180 lines the K(+) pocket.

The protein belongs to the NnrE/AIBP family. The cofactor is K(+).

The catalysed reaction is (6R)-NADHX = (6S)-NADHX. The enzyme catalyses (6R)-NADPHX = (6S)-NADPHX. Functionally, catalyzes the epimerization of the S- and R-forms of NAD(P)HX, a damaged form of NAD(P)H that is a result of enzymatic or heat-dependent hydration. This is a prerequisite for the S-specific NAD(P)H-hydrate dehydratase to allow the repair of both epimers of NAD(P)HX. The chain is NAD(P)H-hydrate epimerase from Legionella pneumophila (strain Paris).